The primary structure comprises 344 residues: tRNA N6-adenosine threonylcarbamoyltransferase (344 aa).

Positions 114 and 118 each coordinate Fe cation. Substrate is bound by residues 136–140 (LVSGG), Asp-170, Gly-183, Asp-187, and Asn-278. Asp-306 is a Fe cation binding site. The interval 325–344 (PSPLDVPSDPGLPVMQGQVR) is disordered.

Belongs to the KAE1 / TsaD family. The cofactor is Fe(2+).

Its subcellular location is the cytoplasm. The catalysed reaction is L-threonylcarbamoyladenylate + adenosine(37) in tRNA = N(6)-L-threonylcarbamoyladenosine(37) in tRNA + AMP + H(+). In terms of biological role, required for the formation of a threonylcarbamoyl group on adenosine at position 37 (t(6)A37) in tRNAs that read codons beginning with adenine. Is involved in the transfer of the threonylcarbamoyl moiety of threonylcarbamoyl-AMP (TC-AMP) to the N6 group of A37, together with TsaE and TsaB. TsaD likely plays a direct catalytic role in this reaction. This Mycobacterium tuberculosis (strain ATCC 25177 / H37Ra) protein is tRNA N6-adenosine threonylcarbamoyltransferase.